The sequence spans 198 residues: Nucleoid occlusion factor SlmA (198 aa).

An HTH tetR-type domain is found at 9–70; it reads RNRREEILQA…SLIEFIEDSL (62 aa). The segment at residues 33 to 52 is a DNA-binding region (H-T-H motif); that stretch reads TTAKLAANVGVSEAALYRHF. Residues 119–144 are a coiled coil; it reads DRLQGRINQLFERIEMQLRQVLREKK.

The protein belongs to the nucleoid occlusion factor SlmA family. In terms of assembly, homodimer. Interacts with FtsZ.

It is found in the cytoplasm. Its subcellular location is the nucleoid. In terms of biological role, required for nucleoid occlusion (NO) phenomenon, which prevents Z-ring formation and cell division over the nucleoid. Acts as a DNA-associated cell division inhibitor that binds simultaneously chromosomal DNA and FtsZ, and disrupts the assembly of FtsZ polymers. SlmA-DNA-binding sequences (SBS) are dispersed on non-Ter regions of the chromosome, preventing FtsZ polymerization at these regions. This chain is Nucleoid occlusion factor SlmA, found in Yersinia pseudotuberculosis serotype I (strain IP32953).